A 189-amino-acid polypeptide reads, in one-letter code: Small ribosomal subunit protein uS7 (189 aa).

The protein belongs to the universal ribosomal protein uS7 family. Part of the 30S ribosomal subunit.

One of the primary rRNA binding proteins, it binds directly to 16S rRNA where it nucleates assembly of the head domain of the 30S subunit. Is located at the subunit interface close to the decoding center. The protein is Small ribosomal subunit protein uS7 of Methanosarcina acetivorans (strain ATCC 35395 / DSM 2834 / JCM 12185 / C2A).